A 1384-amino-acid polypeptide reads, in one-letter code: Hepatocyte growth factor receptor (1384 aa).

An N-terminal signal peptide occupies residues 1-24 (MKAPAVLAPGILVLLFTFVQKSNG). Residues 25–933 (ECKEALVKSR…VIVQPDQNFT (909 aa)) are Extracellular-facing. The Sema domain maps to 27–516 (KEALVKSRMN…TGKKITKIPL (490 aa)). The N-linked (GlcNAc...) asparagine glycan is linked to asparagine 45. 4 disulfide bridges follow: cysteine 95–cysteine 101, cysteine 98–cysteine 160, cysteine 133–cysteine 141, and cysteine 173–cysteine 176. Asparagine 106 carries an N-linked (GlcNAc...) asparagine glycan. Residue asparagine 149 is glycosylated (N-linked (GlcNAc...) asparagine). N-linked (GlcNAc...) asparagine glycosylation is found at asparagine 203 and asparagine 359. Disulfide bonds link cysteine 299-cysteine 364 and cysteine 386-cysteine 398. Residues asparagine 400 and asparagine 406 are each glycosylated (N-linked (GlcNAc...) asparagine). 4 disulfide bridges follow: cysteine 521–cysteine 539, cysteine 527–cysteine 562, cysteine 530–cysteine 546, and cysteine 542–cysteine 552. IPT/TIG domains follow at residues 564-656 (PTIY…FSYV), 658-740 (PIIT…FIYR), and 743-837 (PIVY…LIYV). Threonine 583 carries O-linked (Man) threonine glycosylation. 2 N-linked (GlcNAc...) asparagine glycosylation sites follow: asparagine 608 and asparagine 636. Residues threonine 677 and threonine 762 are each glycosylated (O-linked (Man) threonine). Residues asparagine 786, asparagine 880, and asparagine 931 are each glycosylated (N-linked (GlcNAc...) asparagine). The helical transmembrane segment at 934-956 (GLIVGVVSVSIILLLLLGLFLWL) threads the bilayer. Residues 957-1384 (KKRKQIKDLG…NVSGEDDDDT (428 aa)) are Cytoplasmic-facing. A Phosphoserine modification is found at serine 967. Threonine 978 carries the phosphothreonine modification. A phosphoserine mark is found at serine 991, serine 998, and serine 1001. Tyrosine 1004 bears the Phosphotyrosine mark. The Protein kinase domain occupies 1079 to 1346 (VHFNEVIGRG…RIAAIFSAFI (268 aa)). ATP is bound by residues 1085 to 1093 (IGRGHFGCV) and lysine 1111. Aspartate 1205 serves as the catalytic Proton acceptor. The tract at residues 1213 to 1382 (LDEKFTVKVA…QENVSGEDDD (170 aa)) is interaction with RANBP9. The residue at position 1231 (tyrosine 1231) is a Phosphotyrosine. Tyrosine 1235 and tyrosine 1236 each carry phosphotyrosine; by autocatalysis. Phosphothreonine is present on threonine 1290. Residues 1321–1360 (WHPKAELRPSFSELVSRIAAIFSAFIGEHYVHVNATYVNV) are interaction with MUC20. Residues tyrosine 1350 and tyrosine 1357 each carry the phosphotyrosine; by autocatalysis modification. Tyrosine 1366 bears the Phosphotyrosine mark.

Belongs to the protein kinase superfamily. Tyr protein kinase family. As to quaternary structure, heterodimer made of an alpha chain (50 kDa) and a beta chain (145 kDa) which are disulfide linked. Binds PLXNB1. Interacts when phosphorylated with downstream effectors including STAT3, PIK3R1, SRC, PCLG1, GRB2 and GAB1. Interacts with SPSB1, SPSB2 and SPSB4. Interacts with INPP5D/SHIP1. When phosphorylated at Tyr-1357, interacts with INPPL1/SHIP2. Interacts with RANBP9 and RANBP10, as well as SPSB1, SPSB2, SPSB3 and SPSB4. SPSB1 binding occurs in the presence and in the absence of HGF, however HGF treatment has a positive effect on this interaction. Interacts with MUC20; prevents interaction with GRB2 and suppresses hepatocyte growth factor-induced cell proliferation. Interacts with GRB10. Interacts with PTPN1 and PTPN2. Interacts with HSP90AA1 and HSP90AB1; the interaction suppresses MET kinase activity. Interacts with tensin TNS3. Interacts (when phosphorylated) with tensin TNS4 (via SH2 domain); the interaction increases MET protein stability by inhibiting MET endocytosis and subsequent lysosomal degradation. In terms of processing, autophosphorylated in response to ligand binding on Tyr-1235 and Tyr-1236 in the kinase domain leading to further phosphorylation of Tyr-1350 and Tyr-1357 in the C-terminal multifunctional docking site. Dephosphorylated by PTPRJ at Tyr-1350 and Tyr-1366. Dephosphorylated by PTPN1 and PTPN2. Ubiquitinated. Ubiquitination by CBL regulates the receptor stability and activity through proteasomal degradation. Post-translationally, O-mannosylation of IPT/TIG domains by TMEM260 is required for protein maturation. O-mannosylated residues are composed of single mannose glycans that are not elongated or modified.

The protein localises to the membrane. It carries out the reaction L-tyrosyl-[protein] + ATP = O-phospho-L-tyrosyl-[protein] + ADP + H(+). With respect to regulation, in its inactive state, the C-terminal tail interacts with the catalytic domain and inhibits the kinase activity. Upon ligand binding, the C-terminal tail is displaced and becomes phosphorylated, thus increasing the kinase activity. Its function is as follows. Receptor tyrosine kinase that transduces signals from the extracellular matrix into the cytoplasm by binding to hepatocyte growth factor/HGF ligand. Regulates many physiological processes including proliferation, scattering, morphogenesis and survival. Ligand binding at the cell surface induces autophosphorylation of MET on its intracellular domain that provides docking sites for downstream signaling molecules. Following activation by ligand, interacts with the PI3-kinase subunit PIK3R1, PLCG1, SRC, GRB2, STAT3 or the adapter GAB1. Recruitment of these downstream effectors by MET leads to the activation of several signaling cascades including the RAS-ERK, PI3 kinase-AKT, or PLCgamma-PKC. The RAS-ERK activation is associated with the morphogenetic effects while PI3K/AKT coordinates prosurvival effects. During embryonic development, MET signaling plays a role in gastrulation, development and migration of muscles and neuronal precursors, angiogenesis and kidney formation. In adults, participates in wound healing as well as organ regeneration and tissue remodeling. Also promotes differentiation and proliferation of hematopoietic cells. In Ovis aries (Sheep), this protein is Hepatocyte growth factor receptor (MET).